We begin with the raw amino-acid sequence, 35 residues long: GLIRPSKRCIGGGDPCEFHRPYTCCSGYCIVFVCA.

Residues 1-8 (GLIRPSKR) constitute a propeptide that is removed on maturation. Disulfide bonds link Cys9–Cys25, Cys16–Cys29, and Cys24–Cys34.

It belongs to the conotoxin O1 superfamily. In terms of tissue distribution, expressed by the venom duct.

The protein localises to the secreted. Probable neurotoxin with unknown target. Possibly targets ion channels. In Californiconus californicus (California cone), this protein is Conotoxin Cal6.1f.